A 210-amino-acid polypeptide reads, in one-letter code: Uracil phosphoribosyltransferase (210 aa).

5-phospho-alpha-D-ribose 1-diphosphate is bound by residues arginine 80, arginine 105, and aspartate 132–serine 140. Uracil is bound by residues isoleucine 195 and glycine 200–alanine 202. Position 201 (aspartate 201) interacts with 5-phospho-alpha-D-ribose 1-diphosphate.

The protein belongs to the UPRTase family. It depends on Mg(2+) as a cofactor.

The enzyme catalyses UMP + diphosphate = 5-phospho-alpha-D-ribose 1-diphosphate + uracil. It functions in the pathway pyrimidine metabolism; UMP biosynthesis via salvage pathway; UMP from uracil: step 1/1. With respect to regulation, allosterically activated by GTP. Functionally, catalyzes the conversion of uracil and 5-phospho-alpha-D-ribose 1-diphosphate (PRPP) to UMP and diphosphate. This is Uracil phosphoribosyltransferase from Caldanaerobacter subterraneus subsp. tengcongensis (strain DSM 15242 / JCM 11007 / NBRC 100824 / MB4) (Thermoanaerobacter tengcongensis).